We begin with the raw amino-acid sequence, 215 residues long: MSEAKRRAAEKAIEYVENDMIIGVGTGSTVAYFIDALGHTPKRIKGAVSSSEQSTAHLKQHGIEVLELNHTGTLPLYVDGADECDPYKRLIKGGGASLTREKIIAEASKQFICIIDPNKQVATLGKFPLPIEVIPMARSLVARQIMARTDGQPVWREGVITDNGNVILDVHHLCITDPVKLEQELNQIPGVVCVGLFARRCADLVIIGSEPPHIL.

Substrate contacts are provided by residues 26–29 (TGST), 79–82 (DGAD), and 92–95 (KGGG). Residue Glu-101 is the Proton acceptor of the active site. Residue Lys-119 participates in substrate binding.

It belongs to the ribose 5-phosphate isomerase family. In terms of assembly, homodimer.

The catalysed reaction is aldehydo-D-ribose 5-phosphate = D-ribulose 5-phosphate. Its pathway is carbohydrate degradation; pentose phosphate pathway; D-ribose 5-phosphate from D-ribulose 5-phosphate (non-oxidative stage): step 1/1. In terms of biological role, catalyzes the reversible conversion of ribose-5-phosphate to ribulose 5-phosphate. The protein is Ribose-5-phosphate isomerase A of Xylella fastidiosa (strain Temecula1 / ATCC 700964).